Reading from the N-terminus, the 158-residue chain is Transcriptional regulator MraZ (158 aa).

SpoVT-AbrB domains lie at 7 to 57 (THQN…PTAA) and 86 to 129 (AYPV…EPAA). Residues 133-158 (RRAEARTRSRQLALPAQGRRQGGADA) form a disordered region.

This sequence belongs to the MraZ family. As to quaternary structure, forms oligomers.

Its subcellular location is the cytoplasm. It is found in the nucleoid. The chain is Transcriptional regulator MraZ from Gluconacetobacter diazotrophicus (strain ATCC 49037 / DSM 5601 / CCUG 37298 / CIP 103539 / LMG 7603 / PAl5).